Here is a 214-residue protein sequence, read N- to C-terminus: Ribosomal RNA small subunit methyltransferase G (214 aa).

S-adenosyl-L-methionine contacts are provided by residues glycine 56, phenylalanine 61, 107–108, and arginine 125; that span reads IE.

Belongs to the methyltransferase superfamily. RNA methyltransferase RsmG family.

Its subcellular location is the cytoplasm. Functionally, specifically methylates the N7 position of a guanine in 16S rRNA. The protein is Ribosomal RNA small subunit methyltransferase G of Syntrophomonas wolfei subsp. wolfei (strain DSM 2245B / Goettingen).